A 506-amino-acid polypeptide reads, in one-letter code: UDP-glycosyltransferase eriJ (506 aa).

It belongs to the UDP-glycosyltransferase family.

The enzyme catalyses 11-O-acetylcyathatriol + UDP-alpha-D-xylose = erinacine Q + UDP + H(+). It carries out the reaction 11-O-acetylcyathatriol + UDP-alpha-D-glucose = erinacine Q2 + UDP + H(+). It participates in secondary metabolite biosynthesis. In terms of biological role, UDP-glycosyltransferase; part of the gene cluster that mediates the biosynthesis of erinacines, cyathane-xylosides that show unique biological activities, including leishmanicidal activity, stimulating activity for nerve growth-factor synthesis, and agonistic activity toward the kappa opioid receptor. Within the pathway, eriJ tranfers xylose from UDP-xylose onto C-14 of 11-O-acetyl-cyathatriol to form eracine Q, and, at a lower rate, glucose from UDP-D-glucose to produce eracine Q2. The first step of the erinacines biosynthesis pathway is catalyzed by the geranylgeranyl diphosphate (GGPP) synthase eriE via conversion of farnesyl pyrophosphate and isopentyl pyrophosphate into geranylgeranyl pyrophosphate (GGPP). GGPP is then substrate of the diterpene cyclase eriG for the production of cyatha-3,12-diene. The cytochrome P450 monooxygenase eriI then hydroxylates cyatha-3,12-diene at C-14 of the seven-membered ring to produce erinacol, which is further hydroxylated at C-15 by the cytochrome P450 monooxygenase eriC to yield cyathadiol. The cytochrome P450 monooxygenase eriA then catalyzes C-11 hydroxylation in the presence of the short chain dehydrogenase/reductase (SDR) eriH, which leads to the production of cyathatriol. The acetyltransferase eriL converts cyathatriol into 11-O-acetyl-cyathatriol. The SDR eriH catalyzes further oxidation of 11-O-acetyl-cyathatriol into 1-O-acetylcyathin A3. Finally, the glycosyl transferase eriJ tranfers xylose from UDP-xylose onto C-14 of 11-O-acetyl-cyathatriol to form eracine Q. EriJ is also able to convert 11-O-acetyl-cyathatriol to eracine Q2 by using UDP-D-glucose as cosubstrate, but at a lower rate. In Hericium erinaceus (Lion's mane mushroom), this protein is UDP-glycosyltransferase eriJ.